A 74-amino-acid polypeptide reads, in one-letter code: Large ribosomal subunit protein uL29 (74 aa).

The protein belongs to the universal ribosomal protein uL29 family.

This chain is Large ribosomal subunit protein uL29 (rpmC), found in Streptomyces coelicolor (strain ATCC BAA-471 / A3(2) / M145).